We begin with the raw amino-acid sequence, 506 residues long: Probable E3 ubiquitin-protein ligase ARI14 (506 aa).

The tract at residues 79–308 (PDSSSEISLE…VDSGFCIKTE (230 aa)) is TRIAD supradomain. Residues 83-140 (SEISLETDVYEFDGDNDLISMPFCSHKFDSKYWREYLEKNFYYVEKIQTTISCPDQDC) form an RING-type 1 zinc finger. C106, H108, C135, C140, C180, C185, C207, C209, C214, C217, H222, C227, C258, C261, C277, C279, C284, C287, H294, and C304 together coordinate Zn(2+). The IBR-type zinc finger occupies 158 to 227 (EMYERYIWRS…RLESHRPVSC (70 aa)). The segment at 258-287 (CPHCLCSLESDTKMPQFLTCVCRLRFCSRC) adopts an RING-type 2; atypical zinc-finger fold. The segment at 462 to 492 (GTGPFWYCDRCTYANTWEDNECEMCYDDSAS) adopts a RanBP2-type zinc-finger fold.

It belongs to the RBR family. Ariadne subfamily. It depends on Zn(2+) as a cofactor. As to expression, mostly expressed in closed flowers and, to a lower extent, in pollen.

The catalysed reaction is [E2 ubiquitin-conjugating enzyme]-S-ubiquitinyl-L-cysteine + [acceptor protein]-L-lysine = [E2 ubiquitin-conjugating enzyme]-L-cysteine + [acceptor protein]-N(6)-ubiquitinyl-L-lysine.. The protein operates within protein modification; protein ubiquitination. Functionally, might act as an E3 ubiquitin-protein ligase, or as part of E3 complex, which accepts ubiquitin from specific E2 ubiquitin-conjugating enzymes and then transfers it to substrates. Negatively regulates male gametophyte formation and double fertilization. In Arabidopsis thaliana (Mouse-ear cress), this protein is Probable E3 ubiquitin-protein ligase ARI14.